The chain runs to 357 residues: Glycerol-3-phosphate dehydrogenase [NAD(P)+] (357 aa).

Residues S30, F31, R51, and K124 each coordinate NADPH. Positions 124 and 152 each coordinate sn-glycerol 3-phosphate. An NADPH-binding site is contributed by A156. 5 residues coordinate sn-glycerol 3-phosphate: K207, D260, S270, R271, and N272. The active-site Proton acceptor is K207. Position 271 (R271) interacts with NADPH. Position 297 (E297) interacts with NADPH.

This sequence belongs to the NAD-dependent glycerol-3-phosphate dehydrogenase family.

Its subcellular location is the cytoplasm. It carries out the reaction sn-glycerol 3-phosphate + NAD(+) = dihydroxyacetone phosphate + NADH + H(+). The catalysed reaction is sn-glycerol 3-phosphate + NADP(+) = dihydroxyacetone phosphate + NADPH + H(+). The protein operates within membrane lipid metabolism; glycerophospholipid metabolism. Its function is as follows. Catalyzes the reduction of the glycolytic intermediate dihydroxyacetone phosphate (DHAP) to sn-glycerol 3-phosphate (G3P), the key precursor for phospholipid synthesis. In Acinetobacter baumannii (strain SDF), this protein is Glycerol-3-phosphate dehydrogenase [NAD(P)+].